The following is a 481-amino-acid chain: Phosphoglycerate kinase, chloroplastic (481 aa).

The N-terminal 75 residues, 1 to 75 (MASATASHTL…SSKPIRGVAS (75 aa)), are a transit peptide targeting the chloroplast. A98, D99, N101, R115, S137, H138, G140, R141, R196, H228, and R229 together coordinate (2R)-3-phosphoglycerate. G274 serves as a coordination point for ADP. G274 is a binding site for CDP. K276 and K280 together coordinate AMP. ATP is bound at residue K280. Position 298 (G298) interacts with ADP. G298 lines the CDP pocket. 2 residues coordinate AMP: G299 and G371. Positions 299 and 371 each coordinate ATP. The CDP site is built by G396 and F401. F401 contributes to the ADP binding site. E402 contributes to the AMP binding site. ATP contacts are provided by E402, D433, and S434. D433 is a Mg(2+) binding site.

This sequence belongs to the phosphoglycerate kinase family. Monomer. It depends on Mg(2+) as a cofactor.

The protein resides in the plastid. Its subcellular location is the chloroplast. It catalyses the reaction (2R)-3-phosphoglycerate + ATP = (2R)-3-phospho-glyceroyl phosphate + ADP. It functions in the pathway carbohydrate biosynthesis; Calvin cycle. The polypeptide is Phosphoglycerate kinase, chloroplastic (Nicotiana tabacum (Common tobacco)).